A 524-amino-acid chain; its full sequence is mRNA cap guanine-N(7) methyltransferase (524 aa).

The segment at 1–155 is disordered; the sequence is MSDKEAGVAS…DKKRAHDEAE (155 aa). Residues 19 to 40 show a composition bias toward basic and acidic residues; it reads NKDEVDVKNTEEHSKQESKSDI. Residues 68–77 are compositionally biased toward polar residues; the sequence is NNKVISSVYN. Residues 90 to 99 show a composition bias toward basic and acidic residues; sequence KTTDKYDKYG. Polar residues predominate over residues 100-112; the sequence is SRSTPIATPTAPV. Residues 214–522 form the mRNA cap 0 methyltransferase domain; that stretch reads SPIYKLRNFN…FYIGFVFEKL (309 aa). 223–224 lines the mRNA pocket; the sequence is NN. Positions 227, 251, 273, 319, 349, and 354 each coordinate S-adenosyl-L-methionine.

This sequence belongs to the class I-like SAM-binding methyltransferase superfamily. mRNA cap 0 methyltransferase family.

The protein localises to the nucleus. It catalyses the reaction a 5'-end (5'-triphosphoguanosine)-ribonucleoside in mRNA + S-adenosyl-L-methionine = a 5'-end (N(7)-methyl 5'-triphosphoguanosine)-ribonucleoside in mRNA + S-adenosyl-L-homocysteine. Responsible for methylating the 5'-cap structure of mRNAs. The sequence is that of mRNA cap guanine-N(7) methyltransferase (ABD1) from Debaryomyces hansenii (strain ATCC 36239 / CBS 767 / BCRC 21394 / JCM 1990 / NBRC 0083 / IGC 2968) (Yeast).